Consider the following 641-residue polypeptide: Homeobox protein ceh-38 (641 aa).

Polar residues-rich tracts occupy residues 1–14 (MESSRTAATSTNGT) and 28–38 (DPSSTFINNTG). 2 disordered regions span residues 1–79 (MESS…TSSA) and 129–244 (LHVD…GDRM). The segment covering 52-79 (TISPHPITPSASTSSATSATEEPATSSA) has biased composition (low complexity). Residues 131–140 (VDSRRRESHD) are compositionally biased toward basic and acidic residues. Composition is skewed to polar residues over residues 167–183 (TPTNDRSTDLGSISSLL) and 190–204 (NTIGQSPSPRSTFGS). A DNA-binding region (CUT) is located at residues 308 to 394 (NAEIGDDIYI…TRLAILDMKT (87 aa)). Disordered regions lie at residues 398–428 (NRASGMSPPTPAQNVRTHRRSTSDHDGPVSK), 485–508 (GGNIDEPTPFQQVKNISPPPVGDT), and 552–641 (FGVS…LAAN). Positions 427–486 (SKRPRLVFTDIQKRTLQAIFKETQRPSREMQQTIAEHLRLDLSTVANFFMNARRRSRLGG) form a DNA-binding region, homeobox. The segment covering 571 to 604 (HEDDEELDELNDSELAYEEDVEIGDEEEEDEEQA) has biased composition (acidic residues). Residues 613–626 (KVEELEEKTVIKEE) show a composition bias toward basic and acidic residues.

The protein belongs to the CUT homeobox family. As to expression, expressed in the embryo. After gastrulation, expressed in almost all cells. During larval and adult stages, expressed in the dorsal and ventral nerve cord, head and tail neurons, pharynx, gut and head.

The protein localises to the nucleus. Its function is as follows. Probable DNA-binding regulatory protein involved in cell-fate specification. The protein is Homeobox protein ceh-38 (ceh-38) of Caenorhabditis elegans.